We begin with the raw amino-acid sequence, 407 residues long: Imidazolonepropionase (407 aa).

The Fe(3+) site is built by H72 and H74. 2 residues coordinate Zn(2+): H72 and H74. 4-imidazolone-5-propanoate is bound by residues R81, Y144, and H177. An N-formimidoyl-L-glutamate-binding site is contributed by Y144. Residue H242 participates in Fe(3+) binding. H242 serves as a coordination point for Zn(2+). Q245 contacts 4-imidazolone-5-propanoate. D317 is a binding site for Fe(3+). D317 is a Zn(2+) binding site. Residues N319 and G321 each contribute to the N-formimidoyl-L-glutamate site. Residue T322 coordinates 4-imidazolone-5-propanoate.

This sequence belongs to the metallo-dependent hydrolases superfamily. HutI family. Requires Zn(2+) as cofactor. Fe(3+) is required as a cofactor.

Its subcellular location is the cytoplasm. The enzyme catalyses 4-imidazolone-5-propanoate + H2O = N-formimidoyl-L-glutamate. It functions in the pathway amino-acid degradation; L-histidine degradation into L-glutamate; N-formimidoyl-L-glutamate from L-histidine: step 3/3. Catalyzes the hydrolytic cleavage of the carbon-nitrogen bond in imidazolone-5-propanoate to yield N-formimidoyl-L-glutamate. It is the third step in the universal histidine degradation pathway. The protein is Imidazolonepropionase of Rhizobium rhizogenes (Agrobacterium rhizogenes).